The primary structure comprises 177 residues: CCHC-type zinc finger nucleic acid binding protein (177 aa).

Residue Ser-2 is modified to N-acetylserine. The CCHC-type 1 zinc finger occupies 4–21 (NECFKCGRSGHWARECPT). Residue Lys-8 is modified to N6-acetyllysine. Omega-N-methylarginine; by PRMT1 occurs at positions 25 and 27. Positions 25–38 (RGRGMRSRGRGGFT) are RNA-binding Arg/Gly-rich region (RGG-box). Omega-N-methylarginine is present on residues Arg-32 and Arg-34. Ser-49 bears the Phosphoserine mark. CCHC-type zinc fingers lie at residues 52–69 (DICY…DCDL), 72–89 (DACY…DCKE), 96–113 (QCCY…DCDH), 117–134 (QKCY…DCTK), 135–152 (VKCY…NCSK), and 156–173 (VNCY…ECTI). Residues Ala-73, Arg-79, and Gly-80 each carry the omega-N-methylarginine modification.

In terms of assembly, associates with the 40S ribosomal subunit, the 80S ribosome and with polysomes. Post-translationally, arginine methylation by PRMT1 in the Arg/Gly-rich region impedes RNA binding. In terms of tissue distribution, expressed in the liver, kidney, spleen, testis, lung, muscle and adrenal glands.

It localises to the nucleus. The protein resides in the cytoplasm. It is found in the endoplasmic reticulum. Its function is as follows. Single-stranded DNA-binding protein that preferentially binds to the sterol regulatory element (SRE) sequence 5'-GTGCGGTG-3', and thereby mediates transcriptional repression. Has a role as transactivator of the Myc promoter. Binds single-stranded RNA in a sequence-specific manner. Binds G-rich elements in target mRNA coding sequences. Prevents G-quadruplex structure formation in vitro, suggesting a role in supporting translation by resolving stable structures on mRNAs. Functionally, binds to RNA. This is CCHC-type zinc finger nucleic acid binding protein from Homo sapiens (Human).